Reading from the N-terminus, the 128-residue chain is uncharacterized protein (128 aa).

4 helical membrane-spanning segments follow: residues 5–25 (ILAL…YSMM), 27–47 (PVLV…PLFL), 60–80 (QLWW…FIGL), and 87–107 (SAVT…HFFF). The region spanning 9-110 (LIWSSSLIVG…FVGHFFFKTK (102 aa)) is the EamA domain.

It is found in the cell membrane. This is an uncharacterized protein from Haemophilus influenzae (strain ATCC 51907 / DSM 11121 / KW20 / Rd).